The following is an 862-amino-acid chain: DNA mismatch repair protein MutS (862 aa).

Gly-613 to Ser-620 is an ATP binding site.

This sequence belongs to the DNA mismatch repair MutS family.

This protein is involved in the repair of mismatches in DNA. It is possible that it carries out the mismatch recognition step. This protein has a weak ATPase activity. This is DNA mismatch repair protein MutS from Desulfitobacterium hafniense (strain Y51).